The chain runs to 575 residues: Alpha-(1,6)-fucosyltransferase (575 aa).

Residues 1–9 (MRAWTGSWR) are Cytoplasmic-facing. The helical; Signal-anchor for type II membrane protein transmembrane segment at 10 to 30 (WIMLILFAWGTLLFYIGGHLV) threads the bilayer. Topologically, residues 31-575 (RDNDHPDHSS…KYPTYPEAEK (545 aa)) are lumenal. 3 cysteine pairs are disulfide-bonded: C204–C266, C212–C230, and C218–C222. Positions 206 to 493 (KARKLVCNIN…PDASANFHSL (288 aa)) constitute a GT23 domain. A Phosphoserine modification is found at S278. The SH3-binding signature appears at 299–305 (PRPPYLP). The interval 365 to 366 (RR) is important for donor substrate binding. Cysteines 465 and 472 form a disulfide. In terms of domain architecture, SH3 spans 502–563 (QNAHNQIAVY…PSYKVREKIE (62 aa)).

The protein belongs to the glycosyltransferase 23 family. Post-translationally, tyrosine phosphorylated by PKDCC/VLK.

It is found in the golgi apparatus. It localises to the golgi stack membrane. The enzyme catalyses N(4)-{beta-D-GlcNAc-(1-&gt;2)-alpha-D-Man-(1-&gt;3)-[beta-D-GlcNAc-(1-&gt;2)-alpha-D-Man-(1-&gt;6)]-beta-D-Man-(1-&gt;4)-beta-D-GlcNAc-(1-&gt;4)-beta-D-GlcNAc}-L-asparaginyl-[protein] + GDP-beta-L-fucose = an N(4)-{beta-D-GlcNAc-(1-&gt;2)-alpha-D-Man-(1-&gt;3)-[beta-D-GlcNAc-(1-&gt;2)-alpha-D-Man-(1-&gt;6)]-beta-D-Man-(1-&gt;4)-beta-D-GlcNAc-(1-&gt;4)-[alpha-L-Fuc-(1-&gt;6)]-beta-D-GlcNAc}-L-asparaginyl-[protein] + GDP + H(+). The protein operates within protein modification; protein glycosylation. Functionally, catalyzes the addition of fucose in alpha 1-6 linkage to the first GlcNAc residue, next to the peptide chains in N-glycans. This Rattus norvegicus (Rat) protein is Alpha-(1,6)-fucosyltransferase (Fut8).